The sequence spans 511 residues: MTNKLIIFDTTLRDGEQSPGASMTKDEKIRIAKVLEKMKVDVIEAGFAIASEGDFEAVQAVANIVQNSVICSLARALDKDIDRAGEALKGANASRIHTFIATSNIHMKMKLQMTPDQVVGQAVRAVKRANRYTDNIEFSPEDAGRSDEDFLCYIIEAVIKAGATTINIPDTVGYNIPHQFGATIKSLIERIPNSDKAIFSAHCHNDLGLAVANSLSAVLNGARQVECTINGLGERAGNTSLEELVMAVRTRQDIFDCDTNIDTMHILSASRLASSVTGFIIQPNKAIVGANAFAHEAGIHQDGVLKHRETYEIMRAEDVGWNANQLVLGKHSGRNAFKVRLAKLGVEFNDDGSLNDAFRRFKELADKKHEIFDEDLQALVSETQTESCDEAIKLVSLKVCTETNEKNTATVVLFINDKKKTATANTSGAVDATFSAINSLASIKINLQLYSVSNVTQGTDALGEVNVRLEYNGRIVNGQGVDTDIITASAKAYVHGLNKVLTVTNKAHPQI.

Residues 5-267 enclose the Pyruvate carboxyltransferase domain; sequence LIIFDTTLRD…DTNIDTMHIL (263 aa). 4 residues coordinate Mn(2+): Asp-14, His-202, His-204, and Asn-238. The regulatory domain stretch occupies residues 393–511; the sequence is KLVSLKVCTE…TVTNKAHPQI (119 aa).

It belongs to the alpha-IPM synthase/homocitrate synthase family. LeuA type 1 subfamily. Homodimer. Requires Mn(2+) as cofactor.

It is found in the cytoplasm. The enzyme catalyses 3-methyl-2-oxobutanoate + acetyl-CoA + H2O = (2S)-2-isopropylmalate + CoA + H(+). It functions in the pathway amino-acid biosynthesis; L-leucine biosynthesis; L-leucine from 3-methyl-2-oxobutanoate: step 1/4. Functionally, catalyzes the condensation of the acetyl group of acetyl-CoA with 3-methyl-2-oxobutanoate (2-ketoisovalerate) to form 3-carboxy-3-hydroxy-4-methylpentanoate (2-isopropylmalate). This Vesicomyosocius okutanii subsp. Calyptogena okutanii (strain HA) protein is 2-isopropylmalate synthase.